A 404-amino-acid polypeptide reads, in one-letter code: Sorting nexin-5 (404 aa).

N-acetylalanine is present on Ala-2. The 148-residue stretch at 25-172 (LNVDPSLQID…HVFLEYDQDL (148 aa)) folds into the PX domain. Residues 40 to 46 (SERDKVK), 99 to 105 (FDGPREK), and 113 to 116 (EGSM) contribute to the a 1,2-diacyl-sn-glycero-3-phospho-(1D-myo-inositol-4,5-bisphosphate) site. The segment at 169-261 (DQDLSVRRKN…HSLALEEPTV (93 aa)) is interaction with DOCK1. Residues 183 to 200 (FGGFFKSVVKSADEVLFS) are membrane-binding amphipathic helix. Position 193 is a phosphoserine (Ser-193). The BAR domain maps to 202-404 (VKEVDDFFEQ…QSCIDLFKNN (203 aa)). Lys-275 is subject to N6-acetyllysine.

This sequence belongs to the sorting nexin family. Forms heterodimers with BAR domain-containing sorting nexins SNX1 and SNX2; does not homodimerize. The heterodimers are proposed to self-assemble into helical arrays on the membrane to stabilize and expand local membrane curvature underlying endosomal tubule formation. Thought to be a component of the originally described retromer complex (also called SNX-BAR retromer) which is a pentamer containing the heterotrimeric retromer cargo-selective complex (CSC), also described as vacuolar protein sorting subcomplex (VPS), and a heterodimeric membrane-deforming subcomplex formed between SNX1 or SNX2 and SNX5 or SNX6 (also called SNX-BAR subcomplex); the respective CSC and SNX-BAR subcomplexes associate with low affinity. Interacts with SNX1, SNX2, VPS26A, VPS29, VPS35, DCTN1, DOCK1, MIB1, PIP5K1C. Interacts with HGS; increased by PIP5K1C kinase activity and by PtdIns(3P) and/or PtdIns(3,4)P2.

Its subcellular location is the endosome. The protein resides in the early endosome. It localises to the early endosome membrane. The protein localises to the cell membrane. It is found in the cytoplasmic vesicle membrane. Its subcellular location is the cytoplasm. The protein resides in the cell projection. It localises to the phagocytic cup. The protein localises to the ruffle. Its function is as follows. Involved in several stages of intracellular trafficking. Interacts with membranes containing phosphatidylinositol lipids. Acts in part as component of the retromer membrane-deforming SNX-BAR subcomplex. The SNX-BAR retromer mediates retrograde transport of cargo proteins from endosomes to the trans-Golgi network (TGN) and is involved in endosome-to-plasma membrane transport for cargo protein recycling. The SNX-BAR subcomplex functions to deform the donor membrane into a tubular profile called endosome-to-TGN transport carrier (ETC). Does not have in vitro vesicle-to-membrane remodeling activity. Involved in retrograde transport of lysosomal enzyme receptor IGF2R. May function as link between endosomal transport vesicles and dynactin. Plays a role in the internalization of EGFR after EGF stimulation. Involved in EGFR endosomal sorting and degradation; the function involves PIP5K1C and is retromer-independent. Together with PIP5K1C facilitates HGS interaction with ubiquitinated EGFR, which initiates EGFR sorting to intraluminal vesicles (ILVs) of the multivesicular body for subsequent lysosomal degradation. Involved in E-cadherin sorting and degradation; inhibits PIP5K1C-mediated E-cadherin degradation. Plays a role in macropinocytosis. In Rattus norvegicus (Rat), this protein is Sorting nexin-5 (Snx5).